Reading from the N-terminus, the 782-residue chain is Chondroitin proteoglycan 4 (782 aa).

The first 18 residues, methionine 1–proline 18, serve as a signal peptide directing secretion. Residues asparagine 76, asparagine 208, asparagine 462, asparagine 468, asparagine 474, and asparagine 503 are each glycosylated (N-linked (GlcNAc...) asparagine). Residues isoleucine 513 to lysine 726 are disordered. 5 stretches are compositionally biased toward low complexity: residues glutamate 520–glycine 532, serine 548–glutamate 566, serine 573–threonine 612, phenylalanine 662–serine 672, and serine 688–glycine 722. N-linked (GlcNAc...) asparagine glycosylation is present at asparagine 559. Serine 691 carries an O-linked (Xyl...) (chondroitin sulfate) serine glycan. Asparagine 699 carries N-linked (GlcNAc...) asparagine glycosylation. Serine 701, serine 704, serine 708, serine 714, and serine 721 each carry an O-linked (Xyl...) (chondroitin sulfate) serine glycan. Residue asparagine 743 is glycosylated (N-linked (GlcNAc...) asparagine).

This Caenorhabditis elegans protein is Chondroitin proteoglycan 4.